Consider the following 295-residue polypeptide: 33 kDa chaperonin (295 aa).

2 disulfide bridges follow: cysteine 230-cysteine 232 and cysteine 264-cysteine 267.

Belongs to the HSP33 family. Post-translationally, under oxidizing conditions two disulfide bonds are formed involving the reactive cysteines. Under reducing conditions zinc is bound to the reactive cysteines and the protein is inactive.

The protein localises to the cytoplasm. In terms of biological role, redox regulated molecular chaperone. Protects both thermally unfolding and oxidatively damaged proteins from irreversible aggregation. Plays an important role in the bacterial defense system toward oxidative stress. The polypeptide is 33 kDa chaperonin (Ectopseudomonas mendocina (strain ymp) (Pseudomonas mendocina)).